The sequence spans 220 residues: UPF0319 protein YccT (220 aa).

The signal sequence occupies residues 1–20; that stretch reads MKTGALTTFLALCLPVTVFA.

Belongs to the UPF0319 family.

The protein is UPF0319 protein YccT of Salmonella schwarzengrund (strain CVM19633).